A 303-amino-acid polypeptide reads, in one-letter code: Aspartate carbamoyltransferase catalytic subunit (303 aa).

Residues Arg-54 and Thr-55 each contribute to the carbamoyl phosphate site. L-aspartate is bound at residue Lys-83. Residues Arg-104, His-132, and Gln-135 each coordinate carbamoyl phosphate. Arg-164 and Arg-226 together coordinate L-aspartate. Residues Leu-265 and Pro-266 each coordinate carbamoyl phosphate.

This sequence belongs to the aspartate/ornithine carbamoyltransferase superfamily. ATCase family. In terms of assembly, heterooligomer of catalytic and regulatory chains.

The enzyme catalyses carbamoyl phosphate + L-aspartate = N-carbamoyl-L-aspartate + phosphate + H(+). It participates in pyrimidine metabolism; UMP biosynthesis via de novo pathway; (S)-dihydroorotate from bicarbonate: step 2/3. In terms of biological role, catalyzes the condensation of carbamoyl phosphate and aspartate to form carbamoyl aspartate and inorganic phosphate, the committed step in the de novo pyrimidine nucleotide biosynthesis pathway. This chain is Aspartate carbamoyltransferase catalytic subunit, found in Methanocorpusculum labreanum (strain ATCC 43576 / DSM 4855 / Z).